The sequence spans 238 residues: Pyridoxine 5'-phosphate synthase (238 aa).

Asparagine 9 provides a ligand contact to 3-amino-2-oxopropyl phosphate. 11–12 (DH) provides a ligand contact to 1-deoxy-D-xylulose 5-phosphate. Residue arginine 20 participates in 3-amino-2-oxopropyl phosphate binding. The active-site Proton acceptor is the histidine 45. Positions 47 and 52 each coordinate 1-deoxy-D-xylulose 5-phosphate. Glutamate 72 (proton acceptor) is an active-site residue. Residue threonine 102 participates in 1-deoxy-D-xylulose 5-phosphate binding. The active-site Proton donor is the histidine 189. 3-amino-2-oxopropyl phosphate contacts are provided by residues glycine 190 and 211 to 212 (GH).

The protein belongs to the PNP synthase family. In terms of assembly, homooctamer; tetramer of dimers.

The protein localises to the cytoplasm. The enzyme catalyses 3-amino-2-oxopropyl phosphate + 1-deoxy-D-xylulose 5-phosphate = pyridoxine 5'-phosphate + phosphate + 2 H2O + H(+). It participates in cofactor biosynthesis; pyridoxine 5'-phosphate biosynthesis; pyridoxine 5'-phosphate from D-erythrose 4-phosphate: step 5/5. Catalyzes the complicated ring closure reaction between the two acyclic compounds 1-deoxy-D-xylulose-5-phosphate (DXP) and 3-amino-2-oxopropyl phosphate (1-amino-acetone-3-phosphate or AAP) to form pyridoxine 5'-phosphate (PNP) and inorganic phosphate. The chain is Pyridoxine 5'-phosphate synthase from Ehrlichia ruminantium (strain Gardel).